A 448-amino-acid chain; its full sequence is Tubulin beta chain (448 aa).

GTP contacts are provided by Gln11, Glu69, Ser138, Gly142, Thr143, Gly144, Asn204, and Asn226. Position 69 (Glu69) interacts with Mg(2+). Residues 425–448 (YQDAGVDEEEEEYDEEAPVEEPLE) are disordered. Residues 429-448 (GVDEEEEEYDEEAPVEEPLE) are compositionally biased toward acidic residues.

Belongs to the tubulin family. In terms of assembly, dimer of alpha and beta chains. A typical microtubule is a hollow water-filled tube with an outer diameter of 25 nm and an inner diameter of 15 nM. Alpha-beta heterodimers associate head-to-tail to form protofilaments running lengthwise along the microtubule wall with the beta-tubulin subunit facing the microtubule plus end conferring a structural polarity. Microtubules usually have 13 protofilaments but different protofilament numbers can be found in some organisms and specialized cells. Mg(2+) serves as cofactor.

The protein resides in the cytoplasm. Its subcellular location is the cytoskeleton. In terms of biological role, tubulin is the major constituent of microtubules, a cylinder consisting of laterally associated linear protofilaments composed of alpha- and beta-tubulin heterodimers. Microtubules grow by the addition of GTP-tubulin dimers to the microtubule end, where a stabilizing cap forms. Below the cap, tubulin dimers are in GDP-bound state, owing to GTPase activity of alpha-tubulin. This Metarhizium anisopliae (Entomophthora anisopliae) protein is Tubulin beta chain.